The chain runs to 71 residues: uncharacterized protein (71 aa).

Positions 1–21 (MGVGLHGDHVGGELNSANAFT) are cleaved as a signal peptide.

This is an uncharacterized protein from Haemophilus influenzae (strain ATCC 51907 / DSM 11121 / KW20 / Rd).